We begin with the raw amino-acid sequence, 382 residues long: ATP phosphoribosyltransferase regulatory subunit (382 aa).

It belongs to the class-II aminoacyl-tRNA synthetase family. HisZ subfamily. In terms of assembly, heteromultimer composed of HisG and HisZ subunits.

The protein resides in the cytoplasm. It functions in the pathway amino-acid biosynthesis; L-histidine biosynthesis; L-histidine from 5-phospho-alpha-D-ribose 1-diphosphate: step 1/9. Functionally, required for the first step of histidine biosynthesis. May allow the feedback regulation of ATP phosphoribosyltransferase activity by histidine. The polypeptide is ATP phosphoribosyltransferase regulatory subunit (Burkholderia ambifaria (strain ATCC BAA-244 / DSM 16087 / CCUG 44356 / LMG 19182 / AMMD) (Burkholderia cepacia (strain AMMD))).